Here is a 255-residue protein sequence, read N- to C-terminus: Hydroxyacylglutathione hydrolase (255 aa).

Positions 56, 58, 60, 61, 114, 133, and 171 each coordinate Zn(2+).

It belongs to the metallo-beta-lactamase superfamily. Glyoxalase II family. Monomer. Requires Zn(2+) as cofactor.

The catalysed reaction is an S-(2-hydroxyacyl)glutathione + H2O = a 2-hydroxy carboxylate + glutathione + H(+). Its pathway is secondary metabolite metabolism; methylglyoxal degradation; (R)-lactate from methylglyoxal: step 2/2. In terms of biological role, thiolesterase that catalyzes the hydrolysis of S-D-lactoyl-glutathione to form glutathione and D-lactic acid. The sequence is that of Hydroxyacylglutathione hydrolase from Rhodopseudomonas palustris (strain BisA53).